Consider the following 362-residue polypeptide: Porin Omp2b (362 aa).

The signal sequence occupies residues 1 to 22 (MNIKSLLLGSAAALVAASGAQA).

The protein belongs to the alphaproteobacteria porin family. As to quaternary structure, homotrimer.

Its subcellular location is the cell outer membrane. Functionally, forms passive diffusion pores that allow small molecular weight hydrophilic materials across the outer membrane. The chain is Porin Omp2b (omp2b) from Brucella abortus (strain S19).